A 396-amino-acid chain; its full sequence is Anaerobic glycerol-3-phosphate dehydrogenase subunit C (396 aa).

2 consecutive 4Fe-4S ferredoxin-type domains span residues 2–29 (NDTSFENCIKCTVCTTACPVSRVNPGYP) and 45–76 (DGALYDEALKYCINCKRCEVACPSDVKIGDII). [4Fe-4S] cluster contacts are provided by Cys9, Cys12, Cys15, Cys19, Cys56, Cys59, Cys62, and Cys66.

In terms of assembly, composed of a catalytic GlpA/B dimer and of GlpC.

The protein resides in the cell inner membrane. It participates in polyol metabolism; glycerol degradation via glycerol kinase pathway; glycerone phosphate from sn-glycerol 3-phosphate (anaerobic route): step 1/1. Electron transfer protein; may also function as the membrane anchor for the GlpAB dimer. The protein is Anaerobic glycerol-3-phosphate dehydrogenase subunit C (glpC) of Escherichia coli O157:H7.